Reading from the N-terminus, the 1369-residue chain is Neurofascin (1369 aa).

The first 25 residues, 1–25, serve as a signal peptide directing secretion; the sequence is MVLHSHQLTYAGIAFALCLHHLISA. Over 26 to 1235 the chain is Extracellular; the sequence is IEVPLDSNIQ…NHVDIATQGW (1210 aa). 2 consecutive Ig-like C2-type domains span residues 42–138 and 144–231; these read PTIT…LQVS and PKEK…NPYT. 2 cysteine pairs are disulfide-bonded: C64/C119 and C163/C214. Residues N241, N247, and N323 are each glycosylated (N-linked (GlcNAc...) asparagine). Ig-like C2-type domains lie at 262-350, 355-442, 448-535, and 539-626; these read PSFM…ISVR, PYWL…AFVS, PRIL…VRLE, and PTRI…AYLT. Intrachain disulfides connect C286–C334 and C376–C426. N427, N464, and N501 each carry an N-linked (GlcNAc...) asparagine glycan. 2 disulfide bridges follow: C470–C519 and C561–C610. Fibronectin type-III domains lie at 645–740, 745–838, 843–945, and 949–1057; these read RPRD…TSGA, NPTG…SGED, APTD…TPEG, and SPRY…TPAS. N-linked (GlcNAc...) asparagine glycosylation occurs at N692. A compositionally biased stretch (polar residues) spans 730 to 739; sequence MPSERYQTSG. The disordered stretch occupies residues 730–753; that stretch reads MPSERYQTSGARPEINPTGVQGAG. N-linked (GlcNAc...) asparagine glycosylation is found at N767, N793, N853, N994, and N1009. Residues 1078-1097 form a disordered region; it reads TTATPTTETPPTEIPTTAIP. N-linked (GlcNAc...) asparagine glycans are attached at residues N1133, N1150, N1156, and N1171. The 90-residue stretch at 1133 to 1222 folds into the Fibronectin type-III 5 domain; sequence NGSSIWDIRA…SYITFTTSSA (90 aa). Residues 1236–1256 form a helical membrane-spanning segment; that stretch reads FIGLMCAIALLVLILLIVCFI. Topologically, residues 1257–1369 are cytoplasmic; it reads KRSRGGKYPV…SPVNAIYSLA (113 aa). Basic and acidic residues-rich tracts occupy residues 1266–1282 and 1289–1298; these read VRDNKDEHLNPEDKNVE and RSLESDEDNK. The interval 1266–1369 is disordered; the sequence is VRDNKDEHLN…SPVNAIYSLA (104 aa). Positions 1300-1313 are enriched in polar residues; it reads LPNSQTSLDGTIKQ.

Belongs to the immunoglobulin superfamily. L1/neurofascin/NgCAM family. Post-translationally, N-glycosylated and O-glycosylated. May be proteolytically cleaved at Arg-636.

The protein resides in the cell membrane. Cell adhesion, ankyrin-binding protein which may be involved in neurite extension, axonal guidance, synaptogenesis, myelination and neuron-glial cell interactions. The sequence is that of Neurofascin (NFASC) from Gallus gallus (Chicken).